The following is a 144-amino-acid chain: Gas vesicle protein A1 (144 aa).

Residues 72–144 (EAGPRKDPGL…APSRRKEEQE (73 aa)) form a disordered region. Basic and acidic residues predominate over residues 113 to 127 (KQARDDGGSERETSS).

This sequence belongs to the gas vesicle GvpA family. The gas vesicle shell is 2 nm thick and consists of a single layer of this protein. It forms helical ribs nearly perpendicular to the long axis of the vesicle.

The protein localises to the gas vesicle shell. Gas vesicles are hollow, gas filled proteinaceous nanostructures found in some microorganisms. During planktonic growth they allow positioning of the organism at a favorable depth for light or nutrient acquisition. GvpA forms the protein shell. It is not clear what function GVs perform in soil bacteria. The polypeptide is Gas vesicle protein A1 (Streptomyces coelicolor (strain ATCC BAA-471 / A3(2) / M145)).